The chain runs to 918 residues: E3 ubiquitin-protein ligase CBL-B-A (918 aa).

The span at 1-18 shows a compositional bias: low complexity; that stretch reads MASGSGSSSSTSSSALSG. The disordered stretch occupies residues 1-27; the sequence is MASGSGSSSSTSSSALSGRLPGSRSAN. Residues 46 to 178 are 4H; that stretch reads PPKQAAADRR…KAIFPSGQFQ (133 aa). The Cbl-PTB domain maps to 46 to 354; it reads PPKQAAADRR…GRSYNPDLTG (309 aa). The tract at residues 179–251 is EF-hand-like; it reads GDNFRITKAD…FEFDIFTRLF (73 aa). The Ca(2+) site is built by D232, T234, N236, Y238, and E243. The segment at 252 to 354 is SH2-like; the sequence is QPWGSILRNW…GRSYNPDLTG (103 aa). A 4-O-phospho-L-tyrosine-binding site is contributed by R297. The segment at 355 to 383 is linker; it reads LCEPTPHDHIKVTQEQYELYCEMGSTFQL. The segment at 384–423 adopts an RING-type zinc-finger fold; the sequence is CKICAENDKDVKIEPCGHLMCTSCLTSWQESDGQGCPFCR. Disordered stretches follow at residues 481–582, 780–831, and 857–918; these read NERQ…RTCR, FPPA…PPAR, and HSDP…MRPT. Positions 483-497 are enriched in polar residues; sequence RQNSPVTSPGSSPLS. Composition is skewed to pro residues over residues 554 to 576 and 821 to 830; these read LPAP…PIPP and PSQPPPPPPA. Polar residues predominate over residues 898–918; the sequence is KASNTKGELLLPNQNLIMRPT.

In terms of assembly, interacts with several SH3 domain-containing proteins and with poly-ubiquitinated proteins.

Its subcellular location is the cytoplasm. The catalysed reaction is S-ubiquitinyl-[E2 ubiquitin-conjugating enzyme]-L-cysteine + [acceptor protein]-L-lysine = [E2 ubiquitin-conjugating enzyme]-L-cysteine + N(6)-ubiquitinyl-[acceptor protein]-L-lysine.. The protein operates within protein modification; protein ubiquitination. Its function is as follows. E3 ubiquitin-protein ligase which accepts ubiquitin from specific E2 ubiquitin-conjugating enzymes, and transfers it to substrates, generally promoting their degradation by the proteasome. The chain is E3 ubiquitin-protein ligase CBL-B-A (cblb-a) from Xenopus laevis (African clawed frog).